The primary structure comprises 432 residues: D-amino acid dehydrogenase (432 aa).

3–17 (VVILGSGVVGVASAW) is an FAD binding site.

This sequence belongs to the DadA oxidoreductase family. Requires FAD as cofactor.

The catalysed reaction is a D-alpha-amino acid + A + H2O = a 2-oxocarboxylate + AH2 + NH4(+). It functions in the pathway amino-acid degradation; D-alanine degradation; NH(3) and pyruvate from D-alanine: step 1/1. Functionally, oxidative deamination of D-amino acids. This Shigella boydii serotype 18 (strain CDC 3083-94 / BS512) protein is D-amino acid dehydrogenase.